Reading from the N-terminus, the 506-residue chain is Maturase K (506 aa).

The protein belongs to the intron maturase 2 family. MatK subfamily.

It localises to the plastid. The protein localises to the chloroplast. Its function is as follows. Usually encoded in the trnK tRNA gene intron. Probably assists in splicing its own and other chloroplast group II introns. The polypeptide is Maturase K (Angiopteris evecta (Mule's foot fern)).